We begin with the raw amino-acid sequence, 234 residues long: MDKESYDYLVKIVLAGPSGTGKSCLLQRFVKNQWDDQVSHTVGIDFASRIISVGMGNQQKRIKLQIWDTAGQEKFRSVARNYYRGAAGAVLVYDVTNKDSFEELSSWLSDIRAMAPSTICVVLAGSKSDLQNQRQVSTEEAAEFCSEKHISSAHETSSYTGSNVEECFLSVVSTIITRIELGEIDPQDQSLGIQYGDLSFRRPVHPSSTSNWWTSITNWDDLVRLERQTRSYCC.

16 to 23 contacts GTP; it reads GPSGTGKS. Residues 39 to 47 carry the Effector region motif; the sequence is SHTVGIDFA. Position 68-72 (68-72) interacts with GTP; it reads DTAGQ. 2 S-geranylgeranyl cysteine lipidation sites follow: Cys233 and Cys234.

It belongs to the small GTPase superfamily. Rab family.

The protein localises to the cell membrane. The polypeptide is GTP-binding protein ypt4 (ypt4) (Schizosaccharomyces pombe (strain 972 / ATCC 24843) (Fission yeast)).